A 175-amino-acid polypeptide reads, in one-letter code: NAD(P)H-quinone oxidoreductase subunit I, chloroplastic (175 aa).

2 4Fe-4S ferredoxin-type domains span residues 55–84 and 95–124; these read GRIH…VNWE and QTYS…MTEE. 8 residues coordinate [4Fe-4S] cluster: Cys-64, Cys-67, Cys-70, Cys-74, Cys-104, Cys-107, Cys-110, and Cys-114.

The protein belongs to the complex I 23 kDa subunit family. In terms of assembly, NDH is composed of at least 16 different subunits, 5 of which are encoded in the nucleus. [4Fe-4S] cluster is required as a cofactor.

It localises to the plastid. The protein localises to the chloroplast thylakoid membrane. The enzyme catalyses a plastoquinone + NADH + (n+1) H(+)(in) = a plastoquinol + NAD(+) + n H(+)(out). It catalyses the reaction a plastoquinone + NADPH + (n+1) H(+)(in) = a plastoquinol + NADP(+) + n H(+)(out). In terms of biological role, NDH shuttles electrons from NAD(P)H:plastoquinone, via FMN and iron-sulfur (Fe-S) centers, to quinones in the photosynthetic chain and possibly in a chloroplast respiratory chain. The immediate electron acceptor for the enzyme in this species is believed to be plastoquinone. Couples the redox reaction to proton translocation, and thus conserves the redox energy in a proton gradient. The sequence is that of NAD(P)H-quinone oxidoreductase subunit I, chloroplastic from Chlorokybus atmophyticus (Soil alga).